Reading from the N-terminus, the 859-residue chain is Auxin response factor 2 (859 aa).

The tract at residues M1–A48 is disordered. Residues G14–S23 are compositionally biased toward low complexity. Positions F164 to M266 form a DNA-binding region, TF-B3. Over residues L396–P407 the composition is skewed to pro residues. Disordered regions lie at residues L396–S442, I687–T736, and R829–S859. Composition is skewed to polar residues over residues I416–L426 and L695–S704. The PB1 domain maps to R733–E817. A compositionally biased stretch (polar residues) spans S847 to S859.

It belongs to the ARF family. Homodimers and heterodimers. Interacts with ARF1. Expressed in the whole plant.

It is found in the nucleus. Its function is as follows. Auxin response factors (ARFs) are transcriptional factors that bind specifically to the DNA sequence 5'-TGTCTC-3' found in the auxin-responsive promoter elements (AuxREs). Could act as transcriptional activator or repressor. Formation of heterodimers with Aux/IAA proteins may alter their ability to modulate early auxin response genes expression. Promotes flowering, stamen development, floral organ abscission and fruit dehiscence. Functions independently of ethylene and cytokinin response pathways. May act as a repressor of cell division and organ growth. The polypeptide is Auxin response factor 2 (ARF2) (Arabidopsis thaliana (Mouse-ear cress)).